Here is a 583-residue protein sequence, read N- to C-terminus: Aspartate--tRNA ligase (583 aa).

Glu-174 contributes to the L-aspartate binding site. The aspartate stretch occupies residues 198-201 (QITK). An L-aspartate-binding site is contributed by Arg-220. ATP is bound by residues 220–222 (RDE) and Gln-229. L-aspartate is bound at residue His-443. Glu-477 contributes to the ATP binding site. Arg-484 is an L-aspartate binding site. Residue 529-532 (GLDR) coordinates ATP.

It belongs to the class-II aminoacyl-tRNA synthetase family. Type 1 subfamily. In terms of assembly, homodimer.

The protein resides in the cytoplasm. It catalyses the reaction tRNA(Asp) + L-aspartate + ATP = L-aspartyl-tRNA(Asp) + AMP + diphosphate. Functionally, catalyzes the attachment of L-aspartate to tRNA(Asp) in a two-step reaction: L-aspartate is first activated by ATP to form Asp-AMP and then transferred to the acceptor end of tRNA(Asp). The polypeptide is Aspartate--tRNA ligase (Streptococcus thermophilus (strain ATCC BAA-491 / LMD-9)).